Consider the following 444-residue polypeptide: tRNA modification GTPase MnmE (444 aa).

(6S)-5-formyl-5,6,7,8-tetrahydrofolate is bound by residues arginine 22, glutamate 79, and arginine 118. The TrmE-type G domain maps to glycine 214–glycine 368. Asparagine 224 lines the K(+) pocket. GTP is bound by residues asparagine 224 to serine 229, threonine 243 to threonine 249, and aspartate 268 to glycine 271. Serine 228 contacts Mg(2+). The K(+) site is built by threonine 243, valine 245, and threonine 248. Threonine 249 contributes to the Mg(2+) binding site. Lysine 444 is a (6S)-5-formyl-5,6,7,8-tetrahydrofolate binding site.

This sequence belongs to the TRAFAC class TrmE-Era-EngA-EngB-Septin-like GTPase superfamily. TrmE GTPase family. In terms of assembly, homodimer. Heterotetramer of two MnmE and two MnmG subunits. Requires K(+) as cofactor.

It localises to the cytoplasm. Exhibits a very high intrinsic GTPase hydrolysis rate. Involved in the addition of a carboxymethylaminomethyl (cmnm) group at the wobble position (U34) of certain tRNAs, forming tRNA-cmnm(5)s(2)U34. The chain is tRNA modification GTPase MnmE from Alkalilimnicola ehrlichii (strain ATCC BAA-1101 / DSM 17681 / MLHE-1).